An 857-amino-acid polypeptide reads, in one-letter code: DNA mismatch repair protein MutS (857 aa).

608-615 (GPNMSGKS) provides a ligand contact to ATP.

The protein belongs to the DNA mismatch repair MutS family.

Its function is as follows. This protein is involved in the repair of mismatches in DNA. It is possible that it carries out the mismatch recognition step. This protein has a weak ATPase activity. The protein is DNA mismatch repair protein MutS of Lactobacillus johnsonii (strain CNCM I-12250 / La1 / NCC 533).